The chain runs to 157 residues: Phosphopantetheine adenylyltransferase (157 aa).

Thr10 contacts substrate. Residues 10–11 (TF) and His18 contribute to the ATP site. Residues Lys42, Leu74, and Arg88 each coordinate substrate. ATP contacts are provided by residues 89 to 91 (GLR), Glu99, and 124 to 130 (NAFISSS).

Belongs to the bacterial CoaD family. As to quaternary structure, homohexamer. It depends on Mg(2+) as a cofactor.

It localises to the cytoplasm. The catalysed reaction is (R)-4'-phosphopantetheine + ATP + H(+) = 3'-dephospho-CoA + diphosphate. Its pathway is cofactor biosynthesis; coenzyme A biosynthesis; CoA from (R)-pantothenate: step 4/5. Tightly binds to CoA, which is presumably a feedback inhibitor. Potently inhibited by D-amethopterin, which simultaneously occupies the 4'-phosphopantetheine- and ATP-binding sites; following treatment with D-amethopterin, H.pylori exhibits morphological characteristics associated with cell death, showing that D-amethopterin displays antimicrobial activity. Reversibly transfers an adenylyl group from ATP to 4'-phosphopantetheine, yielding dephospho-CoA (dPCoA) and pyrophosphate. This chain is Phosphopantetheine adenylyltransferase, found in Helicobacter pylori (strain ATCC 700392 / 26695) (Campylobacter pylori).